The sequence spans 522 residues: F-box only protein 7 (522 aa).

A ubiquitin-like region spans residues 1-87; it reads MKLRVRLQKR…EDAIAAPNLP (87 aa). Polar residues predominate over residues 88–132; sequence SSTVSEHSSVQNNDQPSLATSSSQSNIQDAQLHDSLQGQATQSEV. The segment at 88 to 151 is disordered; that stretch reads SSTVSEHSSV…GQHFEAEAVP (64 aa). Residues 91-128 are important for interaction with PINK1; sequence VSEHSSVQNNDQPSLATSSSQSNIQDAQLHDSLQGQAT. Residues 128 to 168 are important for interaction with CDK6; it reads TQSEVWNDDSVSGPGQHFEAEAVPDVVDVEEGTGYYLAEPM. Positions 179-323 are important for dimerization and interaction with PSMF1; it reads PHSLEILYQS…PLLAFTRQAL (145 aa). Residues 328–374 form the F-box domain; sequence VFGLVVLPLELKLRIFRLLDVRSVLSLSAVCRDLCITSNDQLLWRCL. The important for interaction with CDK6 stretch occupies residues 380-522; that stretch reads RDGSIRGRDT…WPTDSRLPFM (143 aa). An omega-N-methylarginine mark is found at Arg-431 and Arg-451. An RFDP motif motif is present at residues 481-484; it reads RFDP. Residues 484-522 are disordered; it reads PVGPLPGPNPILPGRGGPSDRFPLRPSRGWPTDSRLPFM. Arg-518 is modified (asymmetric dimethylarginine).

In terms of assembly, part of the SCF (SKP1-CUL1-F-box) E3 ubiquitin-protein ligase complex SCF(FBXO7) formed of CUL1, SKP1, RBX1 and FBXO7. Interacts via its C-terminal proline-rich region with DLGAP5. Interacts with BIRC2. Interacts with CDK6 and promotes its interaction with D-type cyclin. Interacts (via the N-terminal Ubl domain) with PRKN. Interacts (via N-terminal region) with PINK1. Interacts with PSMF1.

The protein localises to the cytoplasm. The protein resides in the nucleus. It localises to the mitochondrion. Its subcellular location is the cytosol. Its pathway is protein modification; protein ubiquitination. Substrate recognition component of a SCF (SKP1-CUL1-F-box protein) E3 ubiquitin-protein ligase complex which mediates the ubiquitination and subsequent proteasomal degradation of target proteins and plays a role in several biological processes such as cell cycle, cell proliferation, or maintenance of chromosome stability. Recognizes and ubiquitinates BIRC2 and the cell cycle regulator DLGAP5. Plays a role downstream of PINK1 in the clearance of damaged mitochondria via selective autophagy (mitophagy) by targeting PRKN to dysfunctional depolarized mitochondria. Promotes MFN1 ubiquitination. Mediates the ubiquitination and proteasomal degradation of UXT isoform 2, thereby impairing the NF-kappa-B signaling pathway. Inhibits NF-kappa-B pathway also by promoting the ubiquitinatioin of TRAF2. Affects the assembly state and activity of the proteasome in the cells including neurons by ubiquitinating the proteasomal subunit PSMA2 via 'Lys-63'-linked polyubiquitin chains. Promotes 'Lys-48'-linked polyubiquitination SIRT7, leading to the hydrogen peroxide-induced cell death. The sequence is that of F-box only protein 7 (FBXO7) from Bos taurus (Bovine).